We begin with the raw amino-acid sequence, 119 residues long: MPRVKRGVTARARHKKVLKLAKGYYGARSRTYRVAVQAVTKAGQYAYRDRRQKKRQFRQLWIARINAASRQNGLSYSRFINGLKKASIEIDRKILADIAVFDKVVFATLVEKAKDALAK.

Belongs to the bacterial ribosomal protein bL20 family.

Binds directly to 23S ribosomal RNA and is necessary for the in vitro assembly process of the 50S ribosomal subunit. It is not involved in the protein synthesizing functions of that subunit. The sequence is that of Large ribosomal subunit protein bL20 from Shewanella halifaxensis (strain HAW-EB4).